A 779-amino-acid chain; its full sequence is Mesenchyme-specific cell surface glycoprotein (779 aa).

The first 15 residues, methionine 1 to glycine 15, serve as a signal peptide directing secretion. 2 N-linked (GlcNAc...) asparagine glycosylation sites follow: asparagine 203 and asparagine 234. Residues alanine 249–leucine 363 are disordered. Gly residues predominate over residues glycine 262–asparagine 351. N-linked (GlcNAc...) asparagine glycosylation is found at asparagine 369, asparagine 451, and asparagine 609.

As to expression, restricted to the primary mesenchyme cell lineage.

Its subcellular location is the cell membrane. In terms of biological role, not known. Could be involved in mesenchyme cell migration, adhesion, fusion, or spicule formation. The sequence is that of Mesenchyme-specific cell surface glycoprotein from Strongylocentrotus purpuratus (Purple sea urchin).